Reading from the N-terminus, the 449-residue chain is Trigger factor (449 aa).

The 86-residue stretch at glycine 173–proline 258 folds into the PPIase FKBP-type domain.

The protein belongs to the FKBP-type PPIase family. Tig subfamily.

It localises to the cytoplasm. It carries out the reaction [protein]-peptidylproline (omega=180) = [protein]-peptidylproline (omega=0). Its function is as follows. Involved in protein export. Acts as a chaperone by maintaining the newly synthesized protein in an open conformation. Functions as a peptidyl-prolyl cis-trans isomerase. The sequence is that of Trigger factor from Burkholderia mallei (strain NCTC 10229).